A 280-amino-acid polypeptide reads, in one-letter code: Fructose-1,6-bisphosphatase class 1 (280 aa).

Residues E64, D83, L85, and D86 each coordinate Mg(2+). Substrate contacts are provided by residues D86–S89, Y189, and K220. E226 contacts Mg(2+).

This sequence belongs to the FBPase class 1 family. As to quaternary structure, homotetramer. It depends on Mg(2+) as a cofactor.

Its subcellular location is the cytoplasm. The enzyme catalyses beta-D-fructose 1,6-bisphosphate + H2O = beta-D-fructose 6-phosphate + phosphate. It participates in carbohydrate biosynthesis; gluconeogenesis. This Campylobacter jejuni subsp. doylei (strain ATCC BAA-1458 / RM4099 / 269.97) protein is Fructose-1,6-bisphosphatase class 1.